The sequence spans 320 residues: MDYRVLLYYKYTTIDDPETFAAEHLEFCKSNNLKGRILVSTEGINGTLSGTKEDTDKYIEHMHSDERFADMTFKIDEAEGHAFKKMHVRPRNEIVALGLEDDVDPRVTTGKYYSPSEFKEALEDEDTVILDARNDYEFDLGHFRGAIRPDITRFRDLPDWIRENKDQLDGKNIVTYCTGGIRCEKFSGWLVKEGFENVGQLHGGIATYGKDPETKGQYWDGKMYVFDERISVDVNQVEKTVIGKEHFDGTPCERYINCSNPECNKQILVSEENEDKYLGACSYDCAKHERNRYVAKNNISDEEWNRRLENFKDVPEHAHA.

One can recognise a Rhodanese domain in the interval 123-217 (EDEDTVILDA…YGKDPETKGQ (95 aa)). C177 functions as the Cysteine persulfide intermediate in the catalytic mechanism.

Belongs to the TrhO family.

The catalysed reaction is uridine(34) in tRNA + AH2 + O2 = 5-hydroxyuridine(34) in tRNA + A + H2O. Its function is as follows. Catalyzes oxygen-dependent 5-hydroxyuridine (ho5U) modification at position 34 in tRNAs. This chain is tRNA uridine(34) hydroxylase, found in Staphylococcus haemolyticus (strain JCSC1435).